Reading from the N-terminus, the 760-residue chain is Probable ubiquitin carboxyl-terminal hydrolase creB (760 aa).

Positions 1–28 are disordered; sequence MGSFLRSFRNNAGSTTPSVGAVPAKKEV. Positions 8–18 are enriched in polar residues; it reads FRNNAGSTTPS. Residues 55–469 enclose the USP domain; it reads YGMENYGNTC…CAYVLFYQET (415 aa). C64 acts as the Nucleophile in catalysis. Disordered regions lie at residues 114-146 and 242-270; these read AEAQ…DSPD and PAAI…KTPN. Over residues 258-270 the composition is skewed to polar residues; it reads VDQSASSGSKTPN. Catalysis depends on H420, which acts as the Proton acceptor. The interval 520–760 is disordered; sequence EEHNRPNGLK…LRKKSFSILS (241 aa). Residues 575–635 adopt a coiled-coil conformation; the sequence is KSDVQGKKER…AALEASKASK (61 aa). 3 stretches are compositionally biased toward basic and acidic residues: residues 578-626, 635-651, and 708-742; these read VQGK…ELKA, KAQE…KDKL, and DPKD…ERTG. Positions 743–760 are enriched in basic residues; it reads HGKWRSFSLRKKSFSILS.

It belongs to the peptidase C19 family. As to quaternary structure, interacts with creA, creC and qutD.

It carries out the reaction Thiol-dependent hydrolysis of ester, thioester, amide, peptide and isopeptide bonds formed by the C-terminal Gly of ubiquitin (a 76-residue protein attached to proteins as an intracellular targeting signal).. Functionally, ubiquitin thioesterase component of the regulatory network controlling carbon source utilization through ubiquitination and deubiquitination involving creA, creB, creC, creD and acrB. Deubiquitinates the creA catabolic repressor and the quinate permease qutD. Also plays a role in response to carbon starvation and the control of extracellular proteases activity. In Aspergillus clavatus (strain ATCC 1007 / CBS 513.65 / DSM 816 / NCTC 3887 / NRRL 1 / QM 1276 / 107), this protein is Probable ubiquitin carboxyl-terminal hydrolase creB (creB).